The sequence spans 91 residues: Non-structural protein 3a (91 aa).

An N-terminal signal peptide occupies residues 1 to 19 (MVSFNATAILLVLVANAFS).

This Tylonycteris pachypus (Lesser bamboo bat) protein is Non-structural protein 3a.